The primary structure comprises 118 residues: UPF0125 protein RSc1426 (118 aa).

Belongs to the UPF0125 (RnfH) family.

This chain is UPF0125 protein RSc1426, found in Ralstonia nicotianae (strain ATCC BAA-1114 / GMI1000) (Ralstonia solanacearum).